We begin with the raw amino-acid sequence, 216 residues long: MOB kinase activator 3B (216 aa).

Zn(2+)-binding residues include C82, C87, H164, and H169.

The protein belongs to the MOB1/phocein family.

In terms of biological role, modulates LATS1 expression in the Hippo signaling pathway which plays a pivotal role in organ size control and tumor suppression by restricting proliferation and promoting apoptosis. This Homo sapiens (Human) protein is MOB kinase activator 3B.